The following is a 326-amino-acid chain: Homoserine kinase (326 aa).

Belongs to the pseudomonas-type ThrB family.

It catalyses the reaction L-homoserine + ATP = O-phospho-L-homoserine + ADP + H(+). It functions in the pathway amino-acid biosynthesis; L-threonine biosynthesis; L-threonine from L-aspartate: step 4/5. This chain is Homoserine kinase, found in Sinorhizobium fredii (strain NBRC 101917 / NGR234).